The primary structure comprises 604 residues: Elongation factor 4 (604 aa).

The region spanning 7–189 (KRIRNFCIIA…SVVDRVPPPA (183 aa)) is the tr-type G domain. Residues 19–24 (DHGKST) and 136–139 (NKID) each bind GTP.

The protein belongs to the TRAFAC class translation factor GTPase superfamily. Classic translation factor GTPase family. LepA subfamily.

The protein resides in the cell inner membrane. The enzyme catalyses GTP + H2O = GDP + phosphate + H(+). In terms of biological role, required for accurate and efficient protein synthesis under certain stress conditions. May act as a fidelity factor of the translation reaction, by catalyzing a one-codon backward translocation of tRNAs on improperly translocated ribosomes. Back-translocation proceeds from a post-translocation (POST) complex to a pre-translocation (PRE) complex, thus giving elongation factor G a second chance to translocate the tRNAs correctly. Binds to ribosomes in a GTP-dependent manner. This Synechococcus sp. (strain CC9311) protein is Elongation factor 4.